The chain runs to 442 residues: C4-dicarboxylate transport protein 2 (442 aa).

9 helical membrane-spanning segments follow: residues 20 to 39, 52 to 74, 89 to 111, 141 to 158, 162 to 179, 200 to 221, 231 to 253, 342 to 364, and 368 to 387; these read QLYV…GHYY, AFIK…TGIA, AMLY…ANVV, VTGF…GAFA, ILQV…LALV, LVSV…FTIG, LAML…LGAV, ILLL…AGFI, and ATLS…ILGV.

It belongs to the dicarboxylate/amino acid:cation symporter (DAACS) (TC 2.A.23) family.

It is found in the cell inner membrane. Responsible for the transport of dicarboxylates such as succinate, fumarate, and malate from the periplasm across the membrane. This transport system plays an important role in the energy supply of rhizobium-legume symbionts. The protein is C4-dicarboxylate transport protein 2 (dctA2) of Mesorhizobium japonicum (strain LMG 29417 / CECT 9101 / MAFF 303099) (Mesorhizobium loti (strain MAFF 303099)).